The primary structure comprises 196 residues: Holliday junction branch migration complex subunit RuvA (196 aa).

Positions 1–65 are domain I; the sequence is MIGNLSGTVD…ENTTQLYGFI (65 aa). A domain II region spans residues 66-143; it reads NKEEQSCLRL…KLETNNNNFY (78 aa). The tract at residues 144–147 is flexible linker; sequence PINE. Residues 147–196 form a domain III region; it reads EDAVSALINLGYEKTKVYDTIKKYKPNLDTKDIIRTALKELSNYEIDIMQ.

This sequence belongs to the RuvA family. In terms of assembly, homotetramer. Forms an RuvA(8)-RuvB(12)-Holliday junction (HJ) complex. HJ DNA is sandwiched between 2 RuvA tetramers; dsDNA enters through RuvA and exits via RuvB. An RuvB hexamer assembles on each DNA strand where it exits the tetramer. Each RuvB hexamer is contacted by two RuvA subunits (via domain III) on 2 adjacent RuvB subunits; this complex drives branch migration. In the full resolvosome a probable DNA-RuvA(4)-RuvB(12)-RuvC(2) complex forms which resolves the HJ.

It localises to the cytoplasm. Its function is as follows. The RuvA-RuvB-RuvC complex processes Holliday junction (HJ) DNA during genetic recombination and DNA repair, while the RuvA-RuvB complex plays an important role in the rescue of blocked DNA replication forks via replication fork reversal (RFR). RuvA specifically binds to HJ cruciform DNA, conferring on it an open structure. The RuvB hexamer acts as an ATP-dependent pump, pulling dsDNA into and through the RuvAB complex. HJ branch migration allows RuvC to scan DNA until it finds its consensus sequence, where it cleaves and resolves the cruciform DNA. This chain is Holliday junction branch migration complex subunit RuvA, found in Wolbachia sp. subsp. Brugia malayi (strain TRS).